Consider the following 402-residue polypeptide: CinA-like protein (402 aa).

Belongs to the CinA family.

This chain is CinA-like protein, found in Deinococcus deserti (strain DSM 17065 / CIP 109153 / LMG 22923 / VCD115).